Consider the following 429-residue polypeptide: Serine hydroxymethyltransferase (429 aa).

(6S)-5,6,7,8-tetrahydrofolate is bound by residues L127 and 131-133; that span reads GHL. At K236 the chain carries N6-(pyridoxal phosphate)lysine. E252 contributes to the (6S)-5,6,7,8-tetrahydrofolate binding site.

It belongs to the SHMT family. In terms of assembly, homodimer. Pyridoxal 5'-phosphate is required as a cofactor.

Its subcellular location is the cytoplasm. The catalysed reaction is (6R)-5,10-methylene-5,6,7,8-tetrahydrofolate + glycine + H2O = (6S)-5,6,7,8-tetrahydrofolate + L-serine. It functions in the pathway one-carbon metabolism; tetrahydrofolate interconversion. The protein operates within amino-acid biosynthesis; glycine biosynthesis; glycine from L-serine: step 1/1. Functionally, catalyzes the reversible interconversion of serine and glycine with tetrahydrofolate (THF) serving as the one-carbon carrier. This reaction serves as the major source of one-carbon groups required for the biosynthesis of purines, thymidylate, methionine, and other important biomolecules. Also exhibits THF-independent aldolase activity toward beta-hydroxyamino acids, producing glycine and aldehydes, via a retro-aldol mechanism. The protein is Serine hydroxymethyltransferase of Rhodospirillum centenum (strain ATCC 51521 / SW).